Here is a 349-residue protein sequence, read N- to C-terminus: NAC domain-containing protein JA2 (349 aa).

Residues 14–163 (LPPGFRFYPT…EWVLCRIYKK (150 aa)) form the NAC domain. The DNA-binding element occupies 111-169 (VGIKKALVFYVGKAPKGSKTNWIMHEYRLFESSRKNNGSSKLDEWVLCRIYKKNSSGPK). Residues 169–194 (KPLMSGLHSSNEYSHGSSTSSSSQFD) are disordered. The span at 177–191 (SSNEYSHGSSTSSSS) shows a compositional bias: low complexity.

In terms of tissue distribution, expressed in guard cells of the epidermis.

It localises to the nucleus. In terms of biological role, transcription factor involved in abscisic acid-mediated stomatal closure. Regulates the expression of NCED1, a gene involved in the biosynthesis of abscisic acid (ABA). Required for the stomatal closure induced by the bacterial pathogen Pseudomonas syringae pv tomato DC3000, but not for stomatal reopening. The sequence is that of NAC domain-containing protein JA2 from Solanum lycopersicum (Tomato).